Here is a 172-residue protein sequence, read N- to C-terminus: Adenine phosphoribosyltransferase (172 aa).

Belongs to the purine/pyrimidine phosphoribosyltransferase family. Homodimer.

The protein localises to the cytoplasm. The enzyme catalyses AMP + diphosphate = 5-phospho-alpha-D-ribose 1-diphosphate + adenine. It functions in the pathway purine metabolism; AMP biosynthesis via salvage pathway; AMP from adenine: step 1/1. Its function is as follows. Catalyzes a salvage reaction resulting in the formation of AMP, that is energically less costly than de novo synthesis. The polypeptide is Adenine phosphoribosyltransferase (Prochlorococcus marinus (strain NATL1A)).